The primary structure comprises 1019 residues: StAR-related lipid transfer protein 8 (1019 aa).

2 disordered regions span residues 92–122 (QPLLGLVPSPSNQPFLSPPQGQEGSQDKVKK) and 134–154 (SLRRKEKGDSRQTEPEQCLAT). The segment covering 100-115 (SPSNQPFLSPPQGQEG) has biased composition (polar residues). A Phosphoserine modification is found at S108. Positions 134-147 (SLRRKEKGDSRQTE) are enriched in basic and acidic residues. R168 carries the post-translational modification Asymmetric dimethylarginine. 2 positions are modified to phosphoserine: S234 and S237. 2 disordered regions span residues 325–355 (MYPDLRPGDKEEEEEEEEEEEEATSSVEVAT) and 406–482 (APAQ…VGAS). The span at 334–347 (KEEEEEEEEEEEEA) shows a compositional bias: acidic residues. Polar residues-rich tracts occupy residues 418 to 430 (NSTAEPISASSLS) and 437 to 455 (ISDTAVSSSELDSSGNSMN). A phosphoserine mark is found at S494 and S502. The Rho-GAP domain occupies 569 to 773 (PPLIHVQRTG…HMISDCKKLF (205 aa)). The interval 731 to 754 (DSSSPRIKSKRSLVGRPGPRDLSE) is disordered. In terms of domain architecture, START spans 805–1013 (AQAAGVSLSL…RDSFPTLQAA (209 aa)).

In terms of assembly, binds both the SH2 and PTB domains of TNS1.

It localises to the cell junction. It is found in the focal adhesion. Functionally, accelerates GTPase activity of RHOA and CDC42, but not RAC1. Stimulates the hydrolysis of phosphatidylinositol 4,5-bisphosphate by PLCD1. The polypeptide is StAR-related lipid transfer protein 8 (Stard8) (Mus musculus (Mouse)).